Consider the following 383-residue polypeptide: Mannitol-1-phosphate 5-dehydrogenase (383 aa).

Position 3–14 (3–14) interacts with NAD(+); it reads ALHFGAGNIGRG.

It belongs to the mannitol dehydrogenase family.

The enzyme catalyses D-mannitol 1-phosphate + NAD(+) = beta-D-fructose 6-phosphate + NADH + H(+). This Serratia proteamaculans (strain 568) protein is Mannitol-1-phosphate 5-dehydrogenase.